The sequence spans 173 residues: Shikimate kinase (173 aa).

12-17 lines the ATP pocket; it reads GSGKTT. Position 16 (Thr-16) interacts with Mg(2+). Substrate is bound by residues Asp-34, Arg-58, and Gly-80. ATP is bound at residue Arg-118. Substrate is bound at residue Arg-136.

This sequence belongs to the shikimate kinase family. As to quaternary structure, monomer. Mg(2+) is required as a cofactor.

It is found in the cytoplasm. It carries out the reaction shikimate + ATP = 3-phosphoshikimate + ADP + H(+). Its pathway is metabolic intermediate biosynthesis; chorismate biosynthesis; chorismate from D-erythrose 4-phosphate and phosphoenolpyruvate: step 5/7. In terms of biological role, catalyzes the specific phosphorylation of the 3-hydroxyl group of shikimic acid using ATP as a cosubstrate. The protein is Shikimate kinase of Moorella thermoacetica (strain ATCC 39073 / JCM 9320).